A 298-amino-acid chain; its full sequence is Mitochondrial distribution and morphology protein 12 (298 aa).

Residues 1–298 (MSIELDWTGL…VYPHFYTLYL (298 aa)) enclose the SMP-LTD domain. A disordered region spans residues 118 to 142 (SEHEESLSRWSDTESETGTCDSSSL). Residues 133 to 142 (ETGTCDSSSL) are compositionally biased toward polar residues.

The protein belongs to the MDM12 family. As to quaternary structure, component of the ER-mitochondria encounter structure (ERMES) or MDM complex, composed of MMM1, MDM10, MDM12 and MDM34. An MMM1 homodimer associates with one molecule of MDM12 on each side in a pairwise head-to-tail manner, and the SMP-LTD domains of MMM1 and MDM12 generate a continuous hydrophobic tunnel for phospholipid trafficking.

It localises to the mitochondrion outer membrane. The protein resides in the endoplasmic reticulum membrane. Functionally, component of the ERMES/MDM complex, which serves as a molecular tether to connect the endoplasmic reticulum (ER) and mitochondria. Components of this complex are involved in the control of mitochondrial shape and protein biogenesis, and function in nonvesicular lipid trafficking between the ER and mitochondria. MDM12 is required for the interaction of the ER-resident membrane protein MMM1 and the outer mitochondrial membrane-resident beta-barrel protein MDM10. The MDM12-MMM1 subcomplex functions in the major beta-barrel assembly pathway that is responsible for biogenesis of all mitochondrial outer membrane beta-barrel proteins, and acts in a late step after the SAM complex. The MDM10-MDM12-MMM1 subcomplex further acts in the TOM40-specific pathway after the action of the MDM12-MMM1 complex. Essential for establishing and maintaining the structure of mitochondria and maintenance of mtDNA nucleoids. The protein is Mitochondrial distribution and morphology protein 12 of Malassezia globosa (strain ATCC MYA-4612 / CBS 7966) (Dandruff-associated fungus).